Reading from the N-terminus, the 693-residue chain is Elongation factor G (693 aa).

Residues 8–284 (HMVRNIGIAA…AVIDYLPAPD (277 aa)) enclose the tr-type G domain. Residues 17–24 (AHIDAGKT), 81–85 (DTPGH), and 135–138 (NKMD) each bind GTP.

Belongs to the TRAFAC class translation factor GTPase superfamily. Classic translation factor GTPase family. EF-G/EF-2 subfamily.

Its subcellular location is the cytoplasm. Functionally, catalyzes the GTP-dependent ribosomal translocation step during translation elongation. During this step, the ribosome changes from the pre-translocational (PRE) to the post-translocational (POST) state as the newly formed A-site-bound peptidyl-tRNA and P-site-bound deacylated tRNA move to the P and E sites, respectively. Catalyzes the coordinated movement of the two tRNA molecules, the mRNA and conformational changes in the ribosome. This is Elongation factor G from Nautilia profundicola (strain ATCC BAA-1463 / DSM 18972 / AmH).